The chain runs to 438 residues: Fibrous sheath-interacting protein 1 (438 aa).

The interval methionine 1 to glutamate 111 is disordered. Residues serine 18–serine 32 are compositionally biased toward low complexity. A compositionally biased stretch (basic and acidic residues) spans serine 53 to aspartate 72. A phosphoserine mark is found at serine 71, serine 88, and serine 89. Residues leucine 131–lysine 157 are a coiled coil. Positions serine 354–glutamate 390 are disordered. 2 stretches are compositionally biased toward basic and acidic residues: residues glycine 359 to threonine 371 and lysine 378 to glutamate 390.

It belongs to the FSIP1 family.

The protein is Fibrous sheath-interacting protein 1 (Fsip1) of Rattus norvegicus (Rat).